We begin with the raw amino-acid sequence, 193 residues long: dCTP deaminase (193 aa).

Residues Arg-110 to Arg-115, Asp-128, Val-136 to Glu-138, Tyr-171, Lys-178, and Gln-182 contribute to the dCTP site. The active-site Proton donor/acceptor is Glu-138.

It belongs to the dCTP deaminase family. Homotrimer.

The enzyme catalyses dCTP + H2O + H(+) = dUTP + NH4(+). Its pathway is pyrimidine metabolism; dUMP biosynthesis; dUMP from dCTP (dUTP route): step 1/2. Its function is as follows. Catalyzes the deamination of dCTP to dUTP. This is dCTP deaminase from Buchnera aphidicola subsp. Schizaphis graminum (strain Sg).